An 86-amino-acid chain; its full sequence is MKQILLISLVVVLAVFAFNVAEGCDATCQFRKAIDDCQKQAHHSNVLQTSVQTTATFTSMDTSQLPGNSVFKECMKQKKKEFSSGK.

A signal peptide spans 1–23 (MKQILLISLVVVLAVFAFNVAEG). 2 disulfide bridges follow: Cys24-Cys28 and Cys37-Cys74.

As to quaternary structure, interacts with human ADCYAP1R1. In terms of tissue distribution, salivary gland (at protein level).

It is found in the secreted. Potent vasodilator. Activates mammalian ADCYAP1R1, a PAC1 receptor, and induces cAMP accumulation in host cells. Causes the development of erythema following superficial injection into the rabbit or human skin. Influences adaptive immune responses mediated by host dendritic cells. Reduces surface expression of CD80 on host dendritic cells stimulated with lipopolysaccharides (LPS) and induces concomitant increase in CD86 expression on a subpopulation of these cells. Redirects cytokine secretion by LPS-activated host dendritic cells toward type 2 responses: decreases secretion of TNF-alpha/TNF, IL-12p40/IL12B and IFN-gamma/IFNG, and increases secretion of IL6 and IL10. Reduces ability of host bone marrow-derived dendritic cells to stimulate proliferation of CD4(+) T-cells. Reprograms the effect of LPS-activated host dendritic cells on cytokine secretion profiles in host T-cells: decreases secretion of TNF-alpha/TNF and IFN-gamma/IFNG, increases secretion of IL6 and IL13, and increases secretion of pro-inflammatory cytokine IL-1beta/IL1B in mixed lymphocyte reaction (MLR) cultures. Reduces LPS-induced up-regulation of CCR7 in activated host dendritic cells. Inhibits IFN-gamma/IFNG and IL-12p40/IL12B production by human peripheral blood mononuclear cells. Increases IL6 and decreases TNF-alpha/TNF production by LPS-stimulated human monocytes. In terms of biological role, (Microbial infection) Probably plays a critical role in the enhancement of Leishmania infectivity in the host attributed to sand fly saliva. The protein is Maxadilan of Lutzomyia longipalpis (Sand fly).